The following is a 186-amino-acid chain: Probable nicotinate-nucleotide adenylyltransferase (186 aa).

It belongs to the NadD family.

It carries out the reaction nicotinate beta-D-ribonucleotide + ATP + H(+) = deamido-NAD(+) + diphosphate. It participates in cofactor biosynthesis; NAD(+) biosynthesis; deamido-NAD(+) from nicotinate D-ribonucleotide: step 1/1. Its function is as follows. Catalyzes the reversible adenylation of nicotinate mononucleotide (NaMN) to nicotinic acid adenine dinucleotide (NaAD). The protein is Probable nicotinate-nucleotide adenylyltransferase of Thermus thermophilus (strain ATCC BAA-163 / DSM 7039 / HB27).